Here is a 208-residue protein sequence, read N- to C-terminus: Small ribosomal subunit protein uS4 (208 aa).

In terms of domain architecture, S4 RNA-binding spans 95–157 (RRIDNVVYRA…DSLKKLIRSN (63 aa)).

Belongs to the universal ribosomal protein uS4 family. In terms of assembly, part of the 30S ribosomal subunit. Contacts protein S5. The interaction surface between S4 and S5 is involved in control of translational fidelity.

In terms of biological role, one of the primary rRNA binding proteins, it binds directly to 16S rRNA where it nucleates assembly of the body of the 30S subunit. Its function is as follows. With S5 and S12 plays an important role in translational accuracy. The polypeptide is Small ribosomal subunit protein uS4 (Borreliella burgdorferi (strain ATCC 35210 / DSM 4680 / CIP 102532 / B31) (Borrelia burgdorferi)).